A 311-amino-acid polypeptide reads, in one-letter code: Ribonuclease Z (311 aa).

The Zn(2+) site is built by H61, H63, D65, H66, H139, D210, and H268. The active-site Proton acceptor is D65.

The protein belongs to the RNase Z family. As to quaternary structure, homodimer. Zn(2+) is required as a cofactor.

The catalysed reaction is Endonucleolytic cleavage of RNA, removing extra 3' nucleotides from tRNA precursor, generating 3' termini of tRNAs. A 3'-hydroxy group is left at the tRNA terminus and a 5'-phosphoryl group is left at the trailer molecule.. Its function is as follows. Zinc phosphodiesterase, which displays some tRNA 3'-processing endonuclease activity. Probably involved in tRNA maturation, by removing a 3'-trailer from precursor tRNA. The chain is Ribonuclease Z from Haloarcula marismortui (strain ATCC 43049 / DSM 3752 / JCM 8966 / VKM B-1809) (Halobacterium marismortui).